Consider the following 309-residue polypeptide: Ribonuclease Z (309 aa).

Zn(2+) is bound by residues His63, His65, Asp67, His68, His145, Asp216, and His274. The Proton acceptor role is filled by Asp67.

Belongs to the RNase Z family. In terms of assembly, homodimer. Requires Zn(2+) as cofactor.

The enzyme catalyses Endonucleolytic cleavage of RNA, removing extra 3' nucleotides from tRNA precursor, generating 3' termini of tRNAs. A 3'-hydroxy group is left at the tRNA terminus and a 5'-phosphoryl group is left at the trailer molecule.. In terms of biological role, zinc phosphodiesterase, which displays some tRNA 3'-processing endonuclease activity. Probably involved in tRNA maturation, by removing a 3'-trailer from precursor tRNA. The polypeptide is Ribonuclease Z (Streptococcus gordonii (strain Challis / ATCC 35105 / BCRC 15272 / CH1 / DL1 / V288)).